The sequence spans 196 residues: Beta-crystallin A2 (196 aa).

The segment at 1–11 (MTSEAMDTLGQ) is N-terminal arm. 2 consecutive Beta/gamma crystallin 'Greek key' domains span residues 12–51 (YKIT…KVES) and 52–98 (GPWV…RPVK). Positions 99–104 (CANHND) are connecting peptide. 2 consecutive Beta/gamma crystallin 'Greek key' domains span residues 105 to 146 (SKAI…KVNA) and 147 to 195 (GAWV…RRIQ).

The protein belongs to the beta/gamma-crystallin family. In terms of assembly, homo/heterodimer, or complexes of higher-order. The structure of beta-crystallin oligomers seems to be stabilized through interactions between the N-terminal arms.

In terms of biological role, crystallins are the dominant structural components of the vertebrate eye lens. This chain is Beta-crystallin A2 (CRYBA2), found in Gallus gallus (Chicken).